We begin with the raw amino-acid sequence, 145 residues long: Basic phospholipase A2 Vb-2 (145 aa).

Residues 1–19 (MNPAHLLVLLAVCVSLLGA) form the signal peptide. A propeptide spanning residues 20–27 (ANIPPQPL) is cleaved from the precursor. 7 disulfide bridges follow: cysteine 38/cysteine 97, cysteine 52/cysteine 144, cysteine 54/cysteine 70, cysteine 69/cysteine 125, cysteine 76/cysteine 118, cysteine 86/cysteine 111, and cysteine 104/cysteine 116. The Ca(2+) site is built by tyrosine 53, glycine 55, and glycine 57. Residue histidine 73 is part of the active site. Aspartate 74 contacts Ca(2+). The active site involves aspartate 119.

The cofactor is Ca(2+). Expressed by the venom gland.

It localises to the secreted. It carries out the reaction a 1,2-diacyl-sn-glycero-3-phosphocholine + H2O = a 1-acyl-sn-glycero-3-phosphocholine + a fatty acid + H(+). In terms of biological role, snake venom phospholipase A2 (PLA2) that has only a weak enzymatic activity. Inhibits neuromuscular transmission by blocking acetylcholine release from the nerve termini. PLA2 catalyzes the calcium-dependent hydrolysis of the 2-acyl groups in 3-sn-phosphoglycerides. This chain is Basic phospholipase A2 Vb-2, found in Bungarus fasciatus (Banded krait).